Consider the following 1880-residue polypeptide: Nonribosomal peptide synthetase otaB (1880 aa).

The segment at 205-594 (AQAVERGNSI…SVSFVGRRQA (390 aa)) is adenylation 1. A Carrier domain is found at 728 to 804 (LPLSPLERQI…ELGAHLEQEA (77 aa)). Position 765 is an O-(pantetheine 4'-phosphoryl)serine (S765). The tract at residues 840–1250 (EDVYPCTALQ…LLSPQDQQQL (411 aa)) is condensation. The tract at residues 1269–1665 (QRQCLAHPQK…GRKDRQVKLR (397 aa)) is adenylation 2.

Belongs to the NRP synthetase family.

The catalysed reaction is 7-carboxymellein + L-phenylalanine + ATP = ochratoxin B + ADP + phosphate + H(+). Its pathway is mycotoxin biosynthesis. Nonribosomal peptide synthetase; part of the gene cluster that mediates the biosynthesis of ochratoxin A (OTA), a mycotoxin composed of a chlorinated type I polyketide dihydroisocoumarin moiety linked to L-phenylalanine, and demonstrated to have nephrotoxic, immunotoxic, genotoxic, neurotoxic, and teratogenic properties. OtaB is responsible for the linking of phenylalanine to the dihydroisocoumarin ring. The pathway begins with the highly reducing polyketide synthase otaA that catalyzes the formation of the isocoumarin group during the initial stages of biosynthesis, starting from one acetate and 4 malonate units, to originate the characteristic pentaketide skeleton 7-methylmellein (7-MM) of the OTA molecule. The newly identified cyclase otaY might be involved in the polyketide cyclization reaction during the initial steps of the OTA biosynthesis. 7-MM is then oxidized into 7-carboxymellein (also called ochratoxin beta) by the cytochrome P450 monooxygenase otaC. The NRPS encoded by the otaB gene is involved in the linking of phenylalanine to the dihydroisocoumarin ring. The reaction catalyzed by NRPS results in the production of ochratoxin B (OTB), which is the non-chlorinated analog of OTA and which subsequently serves as the substrate of the halogenase otaD for chlorination activity to form the final molecular structure of OTA, containing a chlorine atom in the C-5 position of the molecule. In Aspergillus niger (strain ATCC MYA-4892 / CBS 513.88 / FGSC A1513), this protein is Nonribosomal peptide synthetase otaB.